Reading from the N-terminus, the 125-residue chain is RxLR effector protein Avh6 (125 aa).

Residues 1–25 (MRLSSTTFVVLAAVLLASGTAVSKA) form the signal peptide. Residues 48–70 (RFLRSHHTEDGKAKLSNYDNEER) carry the RxLR-dEER motif.

Belongs to the RxLR effector family.

The protein localises to the secreted. It is found in the host cell. Its function is as follows. Effector that suppresses plant defense responses during the early stages of pathogen infection. Suppresses cell death induced by effectors and PAMPs in plant hosts. Triggers a hypersensitive response (HR) in the presence of Rps1d. Suppresses BAX-induced cell death and enhanced P.capsici infection in Nicotiana benthamiana. Also suppresses effector-triggered immunity induction by associating with Avr1b and Rps1b, suggesting a role in suppressing plant immunity. This Phytophthora sojae (Soybean stem and root rot agent) protein is RxLR effector protein Avh6.